A 346-amino-acid polypeptide reads, in one-letter code: uncharacterized protein (346 aa).

This is an uncharacterized protein from Mycoplasma pneumoniae (strain ATCC 29342 / M129 / Subtype 1) (Mycoplasmoides pneumoniae).